Reading from the N-terminus, the 277-residue chain is MKLIDFDVDNDRPFFLIAGPCVIESEYLALHTAEVLKTITDELKIPFIYKSSFDKANRSSGASFRGLGLAEGLRILAKVKETFAVPILTDVHEYTPLDEVASVVDVLQTPAFLCRQTDFITRVCAQGKPVNIKKGQFLAPWDMKHVVAKAKATGNEQIMLCERGASFGYNNLVADMRSLAVMKTFSAPVVFDATHSVQLPGGNGASSGGQREFVPVLARAAIAVGVAGIFMETHPEPEKALSDGANSIPLAQMRHLLQQLRALDTLVKTNELMKELS.

Belongs to the KdsA family.

It is found in the cytoplasm. The catalysed reaction is D-arabinose 5-phosphate + phosphoenolpyruvate + H2O = 3-deoxy-alpha-D-manno-2-octulosonate-8-phosphate + phosphate. It participates in carbohydrate biosynthesis; 3-deoxy-D-manno-octulosonate biosynthesis; 3-deoxy-D-manno-octulosonate from D-ribulose 5-phosphate: step 2/3. It functions in the pathway bacterial outer membrane biogenesis; lipopolysaccharide biosynthesis. The protein is 2-dehydro-3-deoxyphosphooctonate aldolase of Dichelobacter nodosus (strain VCS1703A).